A 1350-amino-acid chain; its full sequence is Tectonin beta-propeller repeat-containing protein (1350 aa).

4 TECPR repeats span residues Gly23 to His59, Leu233 to Gly271, Asp280 to Gly320, and Lys336 to Gly371. A compositionally biased stretch (low complexity) spans Ser396–Lys415. Disordered regions lie at residues Ser396 to Ser420 and Ser671 to Phe691. Residues Tyr816 to Arg955 enclose the Galectin domain. 4 TECPR repeats span residues Met966–Gly1000, Asp1187–Gly1223, Asp1232–Glu1269, and Ser1278–Gly1322.

This sequence belongs to the TECPR1 family.

Its function is as follows. Involved in peroxisome biogenesis. This Drosophila melanogaster (Fruit fly) protein is Tectonin beta-propeller repeat-containing protein (Pex23).